The sequence spans 346 residues: Methionine import ATP-binding protein MetN (346 aa).

In terms of domain architecture, ABC transporter spans 2–243 (VRFEGISKTY…PKHPITQSFL (242 aa)). Residue 40–47 (GRSGAGKS) participates in ATP binding.

Belongs to the ABC transporter superfamily. Methionine importer (TC 3.A.1.24) family. In terms of assembly, the complex is composed of two ATP-binding proteins (MetN), two transmembrane proteins (MetI) and a solute-binding protein (MetQ).

Its subcellular location is the cell inner membrane. The enzyme catalyses L-methionine(out) + ATP + H2O = L-methionine(in) + ADP + phosphate + H(+). It carries out the reaction D-methionine(out) + ATP + H2O = D-methionine(in) + ADP + phosphate + H(+). Its function is as follows. Part of the ABC transporter complex MetNIQ involved in methionine import. Responsible for energy coupling to the transport system. The protein is Methionine import ATP-binding protein MetN of Bradyrhizobium diazoefficiens (strain JCM 10833 / BCRC 13528 / IAM 13628 / NBRC 14792 / USDA 110).